Reading from the N-terminus, the 599-residue chain is Elongation factor 4 (599 aa).

In terms of domain architecture, tr-type G spans A5–K187. GTP is bound by residues D17–T22 and N134–D137.

It belongs to the TRAFAC class translation factor GTPase superfamily. Classic translation factor GTPase family. LepA subfamily.

Its subcellular location is the cell inner membrane. It carries out the reaction GTP + H2O = GDP + phosphate + H(+). Functionally, required for accurate and efficient protein synthesis under certain stress conditions. May act as a fidelity factor of the translation reaction, by catalyzing a one-codon backward translocation of tRNAs on improperly translocated ribosomes. Back-translocation proceeds from a post-translocation (POST) complex to a pre-translocation (PRE) complex, thus giving elongation factor G a second chance to translocate the tRNAs correctly. Binds to ribosomes in a GTP-dependent manner. This is Elongation factor 4 from Ruegeria pomeroyi (strain ATCC 700808 / DSM 15171 / DSS-3) (Silicibacter pomeroyi).